A 192-amino-acid polypeptide reads, in one-letter code: Peptidyl-prolyl cis-trans isomerase 1 (192 aa).

In terms of domain architecture, PPIase cyclophilin-type spans 25–188 (FFDVSIGEEP…KTVTIADCGE (164 aa)).

The protein belongs to the cyclophilin-type PPIase family.

The enzyme catalyses [protein]-peptidylproline (omega=180) = [protein]-peptidylproline (omega=0). In terms of biological role, PPIases accelerate the folding of proteins. It catalyzes the cis-trans isomerization of proline imidic peptide bonds in oligopeptides. The polypeptide is Peptidyl-prolyl cis-trans isomerase 1 (cyn-1) (Caenorhabditis elegans).